Here is a 421-residue protein sequence, read N- to C-terminus: Histidine--tRNA ligase (421 aa).

This sequence belongs to the class-II aminoacyl-tRNA synthetase family. As to quaternary structure, homodimer.

It localises to the cytoplasm. The enzyme catalyses tRNA(His) + L-histidine + ATP = L-histidyl-tRNA(His) + AMP + diphosphate + H(+). This chain is Histidine--tRNA ligase, found in Natranaerobius thermophilus (strain ATCC BAA-1301 / DSM 18059 / JW/NM-WN-LF).